We begin with the raw amino-acid sequence, 235 residues long: Probable transglycosylase SceD (235 aa).

Positions 1–26 (MKKTIIASSLAVGLGVVAGNAGHADA) are cleaved as a signal peptide. Residues 90–159 (QQDVSAQAST…NASSGSSVNV (70 aa)) are disordered. The span at 99 to 110 (TVSNQTSAEQVG) shows a compositional bias: polar residues. Over residues 111-159 (SQQQSSQAQPTQTQQAPQTEQTQQPQTEATTSNSSSSNNNASSGSSVNV) the composition is skewed to low complexity.

This sequence belongs to the transglycosylase family. SceD subfamily.

Its subcellular location is the secreted. In terms of biological role, is able to cleave peptidoglycan and affects clumping and separation of bacterial cells. This is Probable transglycosylase SceD (sceD) from Staphylococcus haemolyticus (strain JCSC1435).